Here is an 880-residue protein sequence, read N- to C-terminus: Leucine--tRNA ligase (880 aa).

The short motif at P49–H59 is the 'HIGH' region element. Residues K638 to S642 carry the 'KMSKS' region motif. Residue K641 participates in ATP binding.

It belongs to the class-I aminoacyl-tRNA synthetase family.

Its subcellular location is the cytoplasm. It carries out the reaction tRNA(Leu) + L-leucine + ATP = L-leucyl-tRNA(Leu) + AMP + diphosphate. In Bartonella henselae (strain ATCC 49882 / DSM 28221 / CCUG 30454 / Houston 1) (Rochalimaea henselae), this protein is Leucine--tRNA ligase.